We begin with the raw amino-acid sequence, 261 residues long: CD40 ligand (261 aa).

At 1 to 22 the chain is on the cytoplasmic side; sequence MVETYHQPAPRSAATGLPVSMK. Residues 23–43 traverse the membrane as a helical; Signal-anchor for type II membrane protein segment; sequence IFMYLLTVFLITQMIGSALFA. At 44–261 the chain is on the extracellular side; sequence VYLHRRLDKI…GFTSFGLLKL (218 aa). One can recognise a THD domain in the interval 122-261; it reads IAAHVISEAS…GFTSFGLLKL (140 aa). Cys-178 and Cys-218 form a disulfide bridge. Asn-240 is a glycosylation site (N-linked (GlcNAc...) asparagine).

It belongs to the tumor necrosis factor family. Homotrimer. Interacts with CD28. CD40 ligand, soluble form: Exists as either a monomer or a homotrimer. Forms a ternary complex between CD40 and integrins for CD40-CD40LG signaling. In terms of processing, the soluble form derives from the membrane form by proteolytic processing.

The protein localises to the cell membrane. Its subcellular location is the cell surface. The protein resides in the secreted. Cytokine that acts as a ligand to CD40/TNFRSF5. Costimulates T-cell proliferation and cytokine production. Its cross-linking on T-cells generates a costimulatory signal which enhances the production of IL4 and IL10 in conjunction with the TCR/CD3 ligation and CD28 costimulation. Induces the activation of NF-kappa-B. Induces the activation of kinases MAPK8 and PAK2 in T-cells. Mediates B-cell proliferation in the absence of co-stimulus as well as IgE production in the presence of IL4. Involved in immunoglobulin class switching. Its function is as follows. Acts as a ligand for integrins, specifically ITGA5:ITGB1 and ITGAV:ITGB3; both integrins and the CD40 receptor are required for activation of CD40-CD40LG signaling, which have cell-type dependent effects, such as B-cell activation, NF-kappa-B signaling and anti-apoptotic signaling. This is CD40 ligand (CD40LG) from Aotus trivirgatus (Three-striped night monkey).